Consider the following 379-residue polypeptide: Queuine tRNA-ribosyltransferase (379 aa).

Asp94 (proton acceptor) is an active-site residue. Residues 94 to 98 (DSGGF), Asp148, Gln191, and Gly218 each bind substrate. The RNA binding stretch occupies residues 249–255 (GVGSPDS). Asp268 functions as the Nucleophile in the catalytic mechanism. Positions 273 to 277 (TRIAR) are RNA binding; important for wobble base 34 recognition. The Zn(2+) site is built by Cys306, Cys308, Cys311, and His337.

Belongs to the queuine tRNA-ribosyltransferase family. Homodimer. Within each dimer, one monomer is responsible for RNA recognition and catalysis, while the other monomer binds to the replacement base PreQ1. Requires Zn(2+) as cofactor.

The catalysed reaction is 7-aminomethyl-7-carbaguanine + guanosine(34) in tRNA = 7-aminomethyl-7-carbaguanosine(34) in tRNA + guanine. It participates in tRNA modification; tRNA-queuosine biosynthesis. Its function is as follows. Catalyzes the base-exchange of a guanine (G) residue with the queuine precursor 7-aminomethyl-7-deazaguanine (PreQ1) at position 34 (anticodon wobble position) in tRNAs with GU(N) anticodons (tRNA-Asp, -Asn, -His and -Tyr). Catalysis occurs through a double-displacement mechanism. The nucleophile active site attacks the C1' of nucleotide 34 to detach the guanine base from the RNA, forming a covalent enzyme-RNA intermediate. The proton acceptor active site deprotonates the incoming PreQ1, allowing a nucleophilic attack on the C1' of the ribose to form the product. After dissociation, two additional enzymatic reactions on the tRNA convert PreQ1 to queuine (Q), resulting in the hypermodified nucleoside queuosine (7-(((4,5-cis-dihydroxy-2-cyclopenten-1-yl)amino)methyl)-7-deazaguanosine). The polypeptide is Queuine tRNA-ribosyltransferase (Bacillus cereus (strain Q1)).